The following is a 114-amino-acid chain: UPF0342 protein LSL_0473 (114 aa).

It belongs to the UPF0342 family.

The protein is UPF0342 protein LSL_0473 of Ligilactobacillus salivarius (strain UCC118) (Lactobacillus salivarius).